A 270-amino-acid polypeptide reads, in one-letter code: Phosphonoacetaldehyde hydrolase (270 aa).

The Nucleophile role is filled by Asp-11. Mg(2+) is bound by residues Asp-11 and Ala-13. Lys-53 (schiff-base intermediate with substrate) is an active-site residue. Residue Asp-187 participates in Mg(2+) binding.

It belongs to the HAD-like hydrolase superfamily. PhnX family. As to quaternary structure, homodimer. It depends on Mg(2+) as a cofactor.

The catalysed reaction is phosphonoacetaldehyde + H2O = acetaldehyde + phosphate + H(+). In terms of biological role, involved in phosphonate degradation. The protein is Phosphonoacetaldehyde hydrolase of Salmonella choleraesuis (strain SC-B67).